Here is a 122-residue protein sequence, read N- to C-terminus: Ig heavy chain V region M603 (122 aa).

An Ig-like domain is found at 1–121 (EVKLVESGGG…WGAGTTVTVS (121 aa)).

This Mus musculus (Mouse) protein is Ig heavy chain V region M603.